The primary structure comprises 94 residues: Large ribosomal subunit protein bL27 (94 aa).

Positions 1–9 (MNLANLQLF) are excised as a propeptide. Residues 11–33 (HKKGGGSTSNGRDSQAKRLGAKA) are disordered.

This sequence belongs to the bacterial ribosomal protein bL27 family. The N-terminus is cleaved by ribosomal processing cysteine protease Prp.

The sequence is that of Large ribosomal subunit protein bL27 from Streptococcus agalactiae serotype V (strain ATCC BAA-611 / 2603 V/R).